We begin with the raw amino-acid sequence, 305 residues long: Aurasperone B biosynthesis cluster protein A (305 aa).

A signal peptide spans 1–26 (MSIFFSIRFWPAAISAAILWLPQVLG). N-linked (GlcNAc...) asparagine glycosylation is found at Asn-29, Asn-34, Asn-64, Asn-83, Asn-132, Asn-183, Asn-218, and Asn-288.

The protein belongs to the bfoA family.

In terms of biological role, part of the gene cluster that mediates the biosynthesis of aurasperone B, a dimeric gamma-naphthopyrone. The first step in the biosynthesis of aurasperone B is the production of gamma-naphthopyrone precursor YWA1 by the non-reducing polyketide synthase albA, via condensation of one acetyl-CoA starter unit with 6 malonyl-CoA units. YWA1 is then methylated by aunE at position C-6 to yield foncesin which is further methylated at position C-8 by aunD to produce fonsecin B. A key enzyme in the biosynthetic pathway is the cytochrome P450 monooxygenase aunB which catalyzes the oxidative dimerization of fonsecin B to aurasperone B. AunB also catalyzes the oxidative dimerization of rubrofusarin B into aurasperone A. The sequence is that of Aurasperone B biosynthesis cluster protein A from Aspergillus niger (strain ATCC MYA-4892 / CBS 513.88 / FGSC A1513).